The following is a 144-amino-acid chain: Large ribosomal subunit protein uL15 (144 aa).

The disordered stretch occupies residues 1–44; the sequence is MNLNELQPAAGSRKLRNRVGRGTSSGNGKTSGRGQKGQKARGKV. Residues 23–35 show a composition bias toward gly residues; the sequence is TSSGNGKTSGRGQ.

The protein belongs to the universal ribosomal protein uL15 family. Part of the 50S ribosomal subunit.

In terms of biological role, binds to the 23S rRNA. In Leuconostoc citreum (strain KM20), this protein is Large ribosomal subunit protein uL15.